A 563-amino-acid chain; its full sequence is Phosphomethylpyrimidine synthase (563 aa).

Residues asparagine 180, methionine 209, tyrosine 238, histidine 274, 294 to 296, 335 to 338, and glutamate 374 each bind substrate; these read SRG and DGLR. Histidine 378 serves as a coordination point for Zn(2+). Tyrosine 401 is a binding site for substrate. Histidine 442 is a Zn(2+) binding site. 3 residues coordinate [4Fe-4S] cluster: cysteine 522, cysteine 525, and cysteine 530.

Belongs to the ThiC family. [4Fe-4S] cluster is required as a cofactor.

It carries out the reaction 5-amino-1-(5-phospho-beta-D-ribosyl)imidazole + S-adenosyl-L-methionine = 4-amino-2-methyl-5-(phosphooxymethyl)pyrimidine + CO + 5'-deoxyadenosine + formate + L-methionine + 3 H(+). It functions in the pathway cofactor biosynthesis; thiamine diphosphate biosynthesis. Its function is as follows. Catalyzes the synthesis of the hydroxymethylpyrimidine phosphate (HMP-P) moiety of thiamine from aminoimidazole ribotide (AIR) in a radical S-adenosyl-L-methionine (SAM)-dependent reaction. The polypeptide is Phosphomethylpyrimidine synthase (Geobacillus thermodenitrificans (strain NG80-2)).